We begin with the raw amino-acid sequence, 152 residues long: 6,7-dimethyl-8-ribityllumazine synthase (152 aa).

5-amino-6-(D-ribitylamino)uracil contacts are provided by residues Phe18, Ala49–Glu51, and Cys75–Ile77. Position 80 to 81 (Glu80 to Thr81) interacts with (2S)-2-hydroxy-3-oxobutyl phosphate. Residue His83 is the Proton donor of the active site. Asn108 provides a ligand contact to 5-amino-6-(D-ribitylamino)uracil. Arg122 contributes to the (2S)-2-hydroxy-3-oxobutyl phosphate binding site.

It belongs to the DMRL synthase family.

The catalysed reaction is (2S)-2-hydroxy-3-oxobutyl phosphate + 5-amino-6-(D-ribitylamino)uracil = 6,7-dimethyl-8-(1-D-ribityl)lumazine + phosphate + 2 H2O + H(+). It functions in the pathway cofactor biosynthesis; riboflavin biosynthesis; riboflavin from 2-hydroxy-3-oxobutyl phosphate and 5-amino-6-(D-ribitylamino)uracil: step 1/2. Functionally, catalyzes the formation of 6,7-dimethyl-8-ribityllumazine by condensation of 5-amino-6-(D-ribitylamino)uracil with 3,4-dihydroxy-2-butanone 4-phosphate. This is the penultimate step in the biosynthesis of riboflavin. This chain is 6,7-dimethyl-8-ribityllumazine synthase, found in Bartonella bacilliformis (strain ATCC 35685 / KC583 / Herrer 020/F12,63).